We begin with the raw amino-acid sequence, 249 residues long: Tetrahydromethanopterin S-methyltransferase subunit D (249 aa).

6 helical membrane-spanning segments follow: residues 9–29, 47–67, 75–95, 138–158, 183–203, and 224–244; these read ILWL…VHFV, GTVQ…GFMM, LILA…MIVG, VSFV…ALVY, LVGI…VIPS, and AVIS…IAIS.

Belongs to the MtrD family. In terms of assembly, the complex is composed of 8 subunits; MtrA, MtrB, MtrC, MtrD, MtrE, MtrF, MtrG and MtrH.

It is found in the cell membrane. The enzyme catalyses 5-methyl-5,6,7,8-tetrahydromethanopterin + coenzyme M + 2 Na(+)(in) = 5,6,7,8-tetrahydromethanopterin + methyl-coenzyme M + 2 Na(+)(out). The protein operates within one-carbon metabolism; methanogenesis from CO(2); methyl-coenzyme M from 5,10-methylene-5,6,7,8-tetrahydromethanopterin: step 2/2. Functionally, part of a complex that catalyzes the formation of methyl-coenzyme M and tetrahydromethanopterin from coenzyme M and methyl-tetrahydromethanopterin. This is an energy-conserving, sodium-ion translocating step. This is Tetrahydromethanopterin S-methyltransferase subunit D from Methanosarcina acetivorans (strain ATCC 35395 / DSM 2834 / JCM 12185 / C2A).